We begin with the raw amino-acid sequence, 607 residues long: Hemagglutinin glycoprotein (607 aa).

Residues 1–37 (MLSYQDKVGAFYKDNARANSSRLSLVTEDQGGRRPPY) are Intravirion-facing. Residues 38–58 (LLFVLLILLVGIMALLAITGV) traverse the membrane as a helical segment. At 59–607 (RFHQVSTSNM…IRFSCNRSKP (549 aa)) the chain is on the virion surface side. Residues Asn-149, Asn-309, Asn-391, Asn-422, Asn-456, Asn-587, and Asn-603 are each glycosylated (N-linked (GlcNAc...) asparagine; by host).

The protein belongs to the paramyxoviruses hemagglutinin-neuraminidase family. Non-sialidase subfamily. Binds canine SLAMF1 at the cell surface.

It localises to the virion membrane. The protein resides in the host cell membrane. In terms of biological role, attaches the virus to cell receptors and thereby initiating infection. Binding of H protein to the receptor induces a conformational change that allows the F protein to trigger virion/cell membranes fusion. The cellular receptor might be SLAM, and may explain the lymphotropism of the virus. The polypeptide is Hemagglutinin glycoprotein (H) (Canine distemper virus (strain A92-27/4) (CDV)).